Reading from the N-terminus, the 318-residue chain is Pantothenate kinase (318 aa).

ATP is bound at residue 96 to 103 (GSVAVGKS).

It belongs to the prokaryotic pantothenate kinase family.

It localises to the cytoplasm. The catalysed reaction is (R)-pantothenate + ATP = (R)-4'-phosphopantothenate + ADP + H(+). It participates in cofactor biosynthesis; coenzyme A biosynthesis; CoA from (R)-pantothenate: step 1/5. This is Pantothenate kinase from Rhodopseudomonas palustris (strain BisB5).